Reading from the N-terminus, the 414-residue chain is MQSWPVPHIDSVPGTPSPLHLYDSADGEVKRLNIKGETATMYVCGITPYDSTHLGHAATYLTFDLIYRQLLDNGYKVNYAQNITDVDDPLFERAERDGVDWRELGTSQINLFRSDMELLSVFPPQHFVGAMEAIDEITEMVQALLDAGAAYVVDDPDYPDVYASIEATKNFGYESNYSREQMETFFAERGGDPERPGKRDPLDALIWRAHREGEPAWESPFGPGRPGWHIECSAIATNRLGSSFDIQGGGSDLKFPHHEFSAAHAEAALGVERMAQSYVHTGMIGLEGTKMSKSLGNLVFVHKLVEAGVDPSAIRLGVFSGHYREDRDWSDEVLHTAQERLERWRAASRNPGTVEEIKEVVHNVRLALAEDLDTQRAIAVLDQWAEQALGAAEASEEASDVLRTAVNSLLGVRL.

Residue Cys44 coordinates Zn(2+). L-cysteinyl-5'-AMP contacts are provided by residues 44 to 47 (CGIT), Thr59, and 82 to 84 (NIT). Residues 46 to 56 (ITPYDSTHLGH) carry the 'HIGH' region motif. The 'ERGGDP' region signature appears at 188 to 193 (ERGGDP). Trp228 contacts L-cysteinyl-5'-AMP. Position 232 (Cys232) interacts with Zn(2+). Residue 250–252 (GSD) participates in L-cysteinyl-5'-AMP binding. His257 provides a ligand contact to Zn(2+). Residue Ile284 coordinates L-cysteinyl-5'-AMP. Residues 290–294 (KMSKS) carry the 'KMSKS' region motif.

The protein belongs to the class-I aminoacyl-tRNA synthetase family. MshC subfamily. Monomer. Zn(2+) is required as a cofactor.

It catalyses the reaction 1D-myo-inositol 2-amino-2-deoxy-alpha-D-glucopyranoside + L-cysteine + ATP = 1D-myo-inositol 2-(L-cysteinylamino)-2-deoxy-alpha-D-glucopyranoside + AMP + diphosphate + H(+). Catalyzes the ATP-dependent condensation of GlcN-Ins and L-cysteine to form L-Cys-GlcN-Ins. This chain is L-cysteine:1D-myo-inositol 2-amino-2-deoxy-alpha-D-glucopyranoside ligase, found in Corynebacterium aurimucosum (strain ATCC 700975 / DSM 44827 / CIP 107346 / CN-1) (Corynebacterium nigricans).